We begin with the raw amino-acid sequence, 771 residues long: Transducin-like enhancer protein 3-B (771 aa).

The segment at 1 to 141 is q domain; sequence MYPQGRHPAP…PLTQQQLQAQ (141 aa). The span at 137-148 shows a compositional bias: low complexity; the sequence is QLQAQHLSHAAH. Disordered regions lie at residues 137–174 and 196–360; these read QLQAQHLSHAAHGPPVQLPPHPSGLQPPGIPPVTGSGS and HHDL…MEAL. The tract at residues 142-209 is GP domain; the sequence is HLSHAAHGPP…EHRERESSTN (68 aa). Basic and acidic residues predominate over residues 196–206; that stretch reads HHDLEHRERES. Low complexity predominate over residues 207–217; sequence STNNSVSPSDS. Residues 210 to 278 are ccN domain; sequence NSVSPSDSLR…TPRVSPSHSP (69 aa). Composition is skewed to basic and acidic residues over residues 219 to 257 and 282 to 293; these read RASEKHRGSSEYSLDPKKRRVEEKDNMSRYDSDGDKSDD and GLDKARALKKDA. Positions 235 to 238 match the Nuclear localization signal motif; sequence KKRR. Positions 279 to 451 are SP domain; sequence PENGLDKARA…GGKPAYSFHV (173 aa). Positions 294 to 309 are enriched in low complexity; that stretch reads PNSPASVASSGSTPSS. Phosphoserine is present on residues S296 and S299. Residues 310 to 319 show a composition bias toward basic and acidic residues; sequence KAKDHPHNDK. Residues 320 to 332 are compositionally biased toward polar residues; the sequence is SSTPGLKSNTPTP. WD repeat units follow at residues 483-521, 529-568, 573-612, 615-654, 656-695, 697-736, and 738-771; these read SHGEVVCAVTISNPTRHVYTGGKGCVKIWDISQPGSKSP, NRDNYIRSCKLLPDGRTLIVGGEASTLTIWDLASQTPRIK, SSAPACYALAISPDAKVCFSCCSDGNIAVWDLHNQTLVRQ, GHTDGASCIDISHDGTKLWTGGLDNTVRSWDLREGRQLQQ, DFTSQIFSLGYCPTGEWLAVGMESSNVEVLHHTKPDKYQL, LHESCVLSLKFAYCGKWFVSTGKDNLLNAWRTPYGASIFQ, and KESSSVLSCDISADDKYIVTGSGDKKATVYEVIY.

The protein belongs to the WD repeat Groucho/TLE family. In terms of tissue distribution, at gastrulation, expression is absent within the axial mesoderm. After gastrulation is complete, expressed in the presomitic mesoderm, but expression in the tailbud doesn't begin until the six to seven somite stage, after which it becomes abundant. Expression is abundant throughout somitogenesis within the posterior half of the somites, but is absent from older somites. Also expressed in a dynamic manner within the neural plate.

Its subcellular location is the nucleus. Its function is as follows. Transcriptional corepressor that binds to a number of transcription factors. Inhibits the transcriptional activation mediated by CTNNB1 and TCF family members in Wnt signaling. The effects of full-length TLE family members may be modulated by association with dominant-negative AES. This is Transducin-like enhancer protein 3-B from Danio rerio (Zebrafish).